We begin with the raw amino-acid sequence, 429 residues long: UPF0597 protein AHA_1619 (429 aa).

It belongs to the UPF0597 family.

This chain is UPF0597 protein AHA_1619, found in Aeromonas hydrophila subsp. hydrophila (strain ATCC 7966 / DSM 30187 / BCRC 13018 / CCUG 14551 / JCM 1027 / KCTC 2358 / NCIMB 9240 / NCTC 8049).